The chain runs to 183 residues: uncharacterized protein (183 aa).

A signal peptide spans 1 to 23; that stretch reads MSAFKKSLLVAGVAMILSNNVFA. A disulfide bond links C41 and C80.

The protein belongs to the fimbrial protein family.

It is found in the fimbrium. This is an uncharacterized protein from Escherichia coli (strain K12).